The chain runs to 382 residues: Mannitol-1-phosphate 5-dehydrogenase (382 aa).

3–14 contributes to the NAD(+) binding site; that stretch reads ALHFGAGNIGRG.

This sequence belongs to the mannitol dehydrogenase family.

It catalyses the reaction D-mannitol 1-phosphate + NAD(+) = beta-D-fructose 6-phosphate + NADH + H(+). This chain is Mannitol-1-phosphate 5-dehydrogenase, found in Salmonella newport (strain SL254).